Reading from the N-terminus, the 338-residue chain is MO25-like protein 2 (338 aa).

Belongs to the Mo25 family.

It localises to the cytoplasm. The protein resides in the cytoskeleton. It is found in the spindle pole. In terms of biological role, regulates asymmetric cell division in Q.p neuroblast lineage. Plays a role in cell shedding during embryogenesis. In Caenorhabditis elegans, this protein is MO25-like protein 2 (mop-25.2).